The sequence spans 156 residues: Neuroactive polyprotein R15 (156 aa).

A signal peptide spans 1–26 (MDSAGLHINFRLSHVLTVVTCILYIL). Residues 27 to 48 (PPTTTAYSLPAPGKAAFQHQLS) constitute a propeptide that is removed on maturation. The cysteines at positions 74 and 81 are disulfide-linked. At Q120 the chain carries Pyrrolidone carboxylic acid.

Expressed within the abdominal ganglion in neurons R15, RB(HE), the two L9(G) gill motoneurons, and L40 interneuron, all are parts of autonomic control circuit that contributes to implementing a central command to coordinate autonomic activity with escape locomotion.

Its subcellular location is the secreted. In terms of biological role, the alpha-1 peptide acts as an osmoregulatory peptide, increasing blood volume, and also modulates the activity of a set of cardiac motor neurons that control heart rate. In Aplysia californica (California sea hare), this protein is Neuroactive polyprotein R15.